The following is a 442-amino-acid chain: C4-dicarboxylate transport protein (442 aa).

9 helical membrane passes run 13–33 (VLYF…HFYP), 49–69 (GIKM…IAGM), 81–101 (LALL…LVVV), 149–169 (AFAK…GFAL), 193–213 (MIAI…AFTI), 227–247 (LMGS…GIIA), 312–332 (IYLT…MTLL), 336–356 (TLLA…GSGF), and 357–377 (IVLA…LAII).

This sequence belongs to the dicarboxylate/amino acid:cation symporter (DAACS) (TC 2.A.23) family.

It localises to the cell membrane. Its function is as follows. Responsible for the transport of dicarboxylates such as succinate, fumarate, and malate across the membrane. This Polynucleobacter asymbioticus (strain DSM 18221 / CIP 109841 / QLW-P1DMWA-1) (Polynucleobacter necessarius subsp. asymbioticus) protein is C4-dicarboxylate transport protein.